A 183-amino-acid polypeptide reads, in one-letter code: Peptidyl-tRNA hydrolase (183 aa).

Residue tyrosine 14 participates in tRNA binding. Residue histidine 19 is the Proton acceptor of the active site. Positions 64 and 66 each coordinate tRNA.

The protein belongs to the PTH family. Monomer.

The protein resides in the cytoplasm. It carries out the reaction an N-acyl-L-alpha-aminoacyl-tRNA + H2O = an N-acyl-L-amino acid + a tRNA + H(+). Hydrolyzes ribosome-free peptidyl-tRNAs (with 1 or more amino acids incorporated), which drop off the ribosome during protein synthesis, or as a result of ribosome stalling. Functionally, catalyzes the release of premature peptidyl moieties from peptidyl-tRNA molecules trapped in stalled 50S ribosomal subunits, and thus maintains levels of free tRNAs and 50S ribosomes. This Syntrophomonas wolfei subsp. wolfei (strain DSM 2245B / Goettingen) protein is Peptidyl-tRNA hydrolase.